A 397-amino-acid polypeptide reads, in one-letter code: Lysophospholipid transporter LplT (397 aa).

Residues 1–17 (MSESVHTNTSLWSKGMK) are Periplasmic-facing. The helical transmembrane segment at 18–38 (AVIVAQFLSAFGDNALLFATL) threads the bilayer. Residues 39–52 (ALLKAQFYPEWSQP) are Cytoplasmic-facing. Residues 53–73 (ILQMVFVGAYILFAPFVGQVA) traverse the membrane as a helical segment. The Periplasmic portion of the chain corresponds to 74–90 (DSFAKGRVMMFANGLKL). Residues 91–111 (LGAASICFGINPFLGYTLVGV) form a helical membrane-spanning segment. Topologically, residues 112–144 (GAAAYSPAKYGILGELTTGSKLVKANGLMEAST) are cytoplasmic. Residues 145–165 (IAAILLGSVAGGVLADWHVLV) traverse the membrane as a helical segment. Ala-166 is a topological domain (periplasmic). The helical transmembrane segment at 167–187 (LAACALAYGGAVVANIYIPKL) threads the bilayer. The Cytoplasmic portion of the chain corresponds to 188 to 226 (AAARPGQSWNLINMTRSFLNACTSLWRNGETRFSLVGTS). A helical membrane pass occupies residues 227 to 247 (LFWGAGVTLRFLLVLWVPVAL). Over 248 to 256 (GITDNATPT) the chain is Periplasmic. Residues 257-277 (YLNAMVAIGIVVGAGAAAKLV) form a helical membrane-spanning segment. Residues 278–280 (TLE) lie on the Cytoplasmic side of the membrane. The helical transmembrane segment at 281–301 (TVSRCMPAGILIGVVVLIFSL) threads the bilayer. Residues 302–304 (QHE) are Periplasmic-facing. The helical transmembrane segment at 305–325 (LLPAYALLMLIGVMGGFFVVP) threads the bilayer. Residues 326–343 (LNALLQERGKKSVGAGNA) are Cytoplasmic-facing. A helical transmembrane segment spans residues 344-364 (IAVQNLGENSAMLLMLGIYSL). Topologically, residues 365–366 (AV) are periplasmic. The helical transmembrane segment at 367-387 (MIGIPVVPIGIGFGALFALAI) threads the bilayer. At 388–397 (TALWIWQRRH) the chain is on the cytoplasmic side.

This sequence belongs to the major facilitator superfamily. LplT (TC 2.A.1.42) family.

Its subcellular location is the cell inner membrane. Its function is as follows. Catalyzes the facilitated diffusion of 2-acyl-glycero-3-phosphoethanolamine (2-acyl-GPE) into the cell. This chain is Lysophospholipid transporter LplT, found in Escherichia coli O8 (strain IAI1).